Reading from the N-terminus, the 100-residue chain is Integration host factor subunit alpha (100 aa).

A disordered region spans residues 50–70; sequence GNFQLRDKPQRPGRNPKTGEE.

This sequence belongs to the bacterial histone-like protein family. As to quaternary structure, heterodimer of an alpha and a beta chain.

Its function is as follows. This protein is one of the two subunits of integration host factor, a specific DNA-binding protein that functions in genetic recombination as well as in transcriptional and translational control. The polypeptide is Integration host factor subunit alpha (Chromobacterium violaceum (strain ATCC 12472 / DSM 30191 / JCM 1249 / CCUG 213 / NBRC 12614 / NCIMB 9131 / NCTC 9757 / MK)).